The chain runs to 148 residues: Lysozyme C (148 aa).

The first 18 residues, 1–18, serve as a signal peptide directing secretion; it reads MKALIILGLVLLSVTVQG. The C-type lysozyme domain maps to 19-148; sequence KIFERCELAR…VSQYVEGCGV (130 aa). 4 disulfides stabilise this stretch: Cys24/Cys146, Cys48/Cys134, Cys83/Cys99, and Cys95/Cys113. Active-site residues include Glu53 and Asp71.

This sequence belongs to the glycosyl hydrolase 22 family. In terms of assembly, monomer.

It catalyses the reaction Hydrolysis of (1-&gt;4)-beta-linkages between N-acetylmuramic acid and N-acetyl-D-glucosamine residues in a peptidoglycan and between N-acetyl-D-glucosamine residues in chitodextrins.. In terms of biological role, lysozymes have primarily a bacteriolytic function; those in tissues and body fluids are associated with the monocyte-macrophage system and enhance the activity of immunoagents. The protein is Lysozyme C (LYZ) of Colobus angolensis (Angolan colobus).